A 348-amino-acid chain; its full sequence is Lipooligosaccharide heptosyltransferase 2 (348 aa).

The protein belongs to the glycosyltransferase 9 family.

The catalysed reaction is an L-alpha-D-Hep-(1-&gt;5)-[alpha-Kdo-(2-&gt;4)]-alpha-Kdo-(2-&gt;6)-lipid A + ADP-L-glycero-beta-D-manno-heptose = an L-alpha-D-Hep-(1-&gt;3)-L-alpha-D-Hep-(1-&gt;5)-[alpha-Kdo-(2-&gt;4)]-alpha-Kdo-(2-&gt;6)-lipid A + ADP + H(+). The protein operates within bacterial outer membrane biogenesis; LOS core biosynthesis. Its function is as follows. Glycosyltransferase involved in the biosynthesis of the core oligosaccharide region of lipooligosaccharide (LOS). Catalyzes the addition of a heptose unit to the heptosyl-Kdo2-lipid A module. This Haemophilus ducreyi (strain 35000HP / ATCC 700724) protein is Lipooligosaccharide heptosyltransferase 2.